An 85-amino-acid chain; its full sequence is Small ribosomal subunit protein bS16c (85 aa).

This sequence belongs to the bacterial ribosomal protein bS16 family.

The protein localises to the plastid. Its subcellular location is the chloroplast. This chain is Small ribosomal subunit protein bS16c, found in Oryza nivara (Indian wild rice).